Reading from the N-terminus, the 167-residue chain is Gem-associated protein 6 (167 aa).

The Sm domain occupies 7–74 (KGPLEWQDYI…VQTVETMNEG (68 aa)). Residues 69–167 (ETMNEGDHRV…LIEGHLTASQ (99 aa)) form the AD domain. Phosphoserine occurs at positions 95 and 166.

Part of the core SMN complex that contains SMN1, GEMIN2/SIP1, DDX20/GEMIN3, GEMIN4, GEMIN5, GEMIN6, GEMIN7, GEMIN8 and STRAP/UNRIP. Part of the SMN-Sm complex that contains SMN1, GEMIN2/SIP1, DDX20/GEMIN3, GEMIN4, GEMIN5, GEMIN6, GEMIN7, GEMIN8, STRAP/UNRIP and the Sm proteins SNRPB, SNRPD1, SNRPD2, SNRPD3, SNRPE, SNRPF and SNRPG. Interacts with GEMIN7; the interaction is direct. Interacts with GEMIN8; the interaction is direct. Interacts with SNRPB, SNRPD2, SNRPD3 and SNRPE; the interaction is direct.

It is found in the nucleus. The protein localises to the nucleoplasm. Its subcellular location is the gem. It localises to the cytoplasm. Functionally, the SMN complex catalyzes the assembly of small nuclear ribonucleoproteins (snRNPs), the building blocks of the spliceosome, and thereby plays an important role in the splicing of cellular pre-mRNAs. Most spliceosomal snRNPs contain a common set of Sm proteins SNRPB, SNRPD1, SNRPD2, SNRPD3, SNRPE, SNRPF and SNRPG that assemble in a heptameric protein ring on the Sm site of the small nuclear RNA to form the core snRNP (Sm core). In the cytosol, the Sm proteins SNRPD1, SNRPD2, SNRPE, SNRPF and SNRPG are trapped in an inactive 6S pICln-Sm complex by the chaperone CLNS1A that controls the assembly of the core snRNP. To assemble core snRNPs, the SMN complex accepts the trapped 5Sm proteins from CLNS1A forming an intermediate. Binding of snRNA inside 5Sm triggers eviction of the SMN complex, thereby allowing binding of SNRPD3 and SNRPB to complete assembly of the core snRNP. This Homo sapiens (Human) protein is Gem-associated protein 6 (GEMIN6).